Consider the following 551-residue polypeptide: Sialic acid-binding Ig-like lectin 5 (551 aa).

Residues 1-16 (MLPLLLLPLLWGGSLQ) form the signal peptide. The Extracellular portion of the chain corresponds to 17–441 (EKPVYELQVQ…LGTGVVPAAL (425 aa)). In terms of domain architecture, Ig-like V-type spans 19–136 (PVYELQVQKS…KYSYQQNKLN (118 aa)). Disulfide bonds link Cys-36-Cys-170, Cys-41-Cys-101, and Cys-164-Cys-213. A glycan (N-linked (GlcNAc...) asparagine) is linked at Asn-100. 3 residues coordinate N-acetylneuraminate: Arg-119, Lys-127, and Ser-129. The 84-residue stretch at 146–229 (PDIHFLEPLE…AQVTTERTVQ (84 aa)) folds into the Ig-like C2-type 1 domain. The segment at 189 to 210 (DPETTRSSELTLTPRPEDHGTN) is disordered. N-linked (GlcNAc...) asparagine glycans are attached at residues Asn-210, Asn-231, and Asn-253. Residues 236 to 330 (PQTITIFRNG…GFLQIFLNLS (95 aa)) form the Ig-like C2-type 2 domain. Residues Cys-269 and Cys-314 are joined by a disulfide bond. N-linked (GlcNAc...) asparagine glycosylation is found at Asn-328, Asn-375, Asn-384, and Asn-393. Residues 442–462 (GGAGVMALLCICLCLIFFLIV) form a helical membrane-spanning segment. Over 463 to 551 (KARRKQAAGR…TEYSEIKTSK (89 aa)) the chain is Cytoplasmic. Positions 469–551 (AAGRPEKMDD…TEYSEIKTSK (83 aa)) are disordered. An ITIM motif motif is present at residues 518 to 523 (LHYASL). Residues 528 to 537 (MKSREPKDQE) are compositionally biased toward basic and acidic residues. An SLAM-like motif motif is present at residues 542-547 (TEYSEI).

It belongs to the immunoglobulin superfamily. SIGLEC (sialic acid binding Ig-like lectin) family. As to expression, expressed by monocytic/myeloid lineage cells. Found at high levels in peripheral blood leukocytes, spleen, bone marrow and at lower levels in lymph node, lung, appendix, placenta, pancreas and thymus. Expressed by monocytes and neutrophils but absent from leukemic cell lines representing early stages of myelomonocytic differentiation.

It localises to the membrane. Putative adhesion molecule that mediates sialic-acid dependent binding to cells. Binds equally to alpha-2,3-linked and alpha-2,6-linked sialic acid. The sialic acid recognition site may be masked by cis interactions with sialic acids on the same cell surface. This is Sialic acid-binding Ig-like lectin 5 (SIGLEC5) from Homo sapiens (Human).